A 386-amino-acid chain; its full sequence is S-adenosylmethionine:tRNA ribosyltransferase-isomerase (386 aa).

This sequence belongs to the QueA family. In terms of assembly, monomer.

It localises to the cytoplasm. The enzyme catalyses 7-aminomethyl-7-carbaguanosine(34) in tRNA + S-adenosyl-L-methionine = epoxyqueuosine(34) in tRNA + adenine + L-methionine + 2 H(+). It participates in tRNA modification; tRNA-queuosine biosynthesis. In terms of biological role, transfers and isomerizes the ribose moiety from AdoMet to the 7-aminomethyl group of 7-deazaguanine (preQ1-tRNA) to give epoxyqueuosine (oQ-tRNA). In Rickettsia canadensis (strain McKiel), this protein is S-adenosylmethionine:tRNA ribosyltransferase-isomerase.